Consider the following 1143-residue polypeptide: AP-3 complex subunit delta (1143 aa).

8 HEAT repeats span residues 129–166 (DLARELANDILTLLSTQKTHILKRAITVLYKIFLRYPE), 167–203 (SLRPAFPKLREKLDDPEPSVVSCSVNVICELARRNPK), 205–242 (YLPLAPVLFRILTNTTNNYWMLIKIVKLFAALTPHEPR), 245–279 (KKLIDPLTNIINSSPSVSLLYECIQTCITGMSDHI), 280–317 (PLMKLCISKLRTLIEHNDQNLKYLGLLALNNIMKIHPK), 318–354 (AVSEHRDLVLNCLEDDDISIRLRALDLLPGMTSKKNI), 356–389 (DIVFKLLDHLDNAEGQYKEQIIEKIIELCSMGTY), and 416–455 (LIASQLLDVVIRVKIVRAYSTRQMIELLKNPKLMSNPTEG). Disordered regions lie at residues 520 to 541 (KIPSLDDDDEEEEAQEEEDQNE), 634 to 692 (QEPI…RHPI), 704 to 728 (KQANNPYMLGGKVSKKLSTNDPENI), 741 to 792 (HVGA…NDAL), and 829 to 899 (KKNA…QAAA). A compositionally biased stretch (acidic residues) spans 524 to 540 (LDDDDEEEEAQEEEDQN). Residues 526-550 (DDDEEEEAQEEEDQNEITHEIVQEC) are a coiled coil. Positions 653 to 662 (HQKKHHKHHR) are enriched in basic residues. Residues 666 to 675 (DGDDDEDDET) are compositionally biased toward acidic residues. A coiled-coil region spans residues 814–835 (TDIIKEKEREMAMLAKKNAKLS). A compositionally biased stretch (polar residues) spans 840–849 (PSTANYSEVT). Composition is skewed to low complexity over residues 854–867 (APAKKATKKAAAGS) and 881–899 (KPAATSSTTTTTKSTQAAA). Residues 914 to 1016 (KTILDDDNFK…FTLLASPSSS (103 aa)) form the GAE domain.

This sequence belongs to the adaptor complexes large subunit family. In terms of assembly, adaptor protein complex 3 (AP-3) is a heterotetramer composed of two large adaptins (delta-type subunit and beta-type subunit), a medium adaptin (mu-type subunit) and a small adaptin (sigma-type subunit).

The protein localises to the endosome membrane. Its function is as follows. Part of the AP-3 complex, an adaptor-related complex which is essential for the compartmentalization of the endocytic pathway. The polypeptide is AP-3 complex subunit delta (ap3d1) (Dictyostelium discoideum (Social amoeba)).